The chain runs to 165 residues: 2-halobenzoate 1,2-dioxygenase small subunit (165 aa).

Belongs to the bacterial ring-hydroxylating dioxygenase beta subunit family. As to quaternary structure, heterohexamer of 3 large (CbdA) subunits and 3 small (CbdB) subunits. The heterohexamer is part of 2-halobenzoate dioxygenase two component enzyme system. The other component is a NADH:acceptor reductase (CdbC).

It carries out the reaction a 2-halobenzoate + NADH + O2 + H(+) = a halide anion + catechol + CO2 + NAD(+). It participates in xenobiotic degradation; benzoate degradation via CoA ligation. Its function is as follows. Component of 2-halobenzoate dioxygenase multicomponent enzyme system which catalyzes the incorporation of both atoms of molecular oxygen into 2-halobenzoate to form catechol. In Burkholderia cepacia (Pseudomonas cepacia), this protein is 2-halobenzoate 1,2-dioxygenase small subunit (cbdB).